We begin with the raw amino-acid sequence, 406 residues long: tRNA-specific 2-thiouridylase MnmA (406 aa).

Residues 42-49 and Leu68 each bind ATP; that span reads GLSGGVDS. Cys129 functions as the Nucleophile in the catalytic mechanism. The cysteines at positions 129 and 239 are disulfide-linked. Gly154 contacts ATP. Residues 189–191 form an interaction with tRNA region; sequence KDQ. The active-site Cysteine persulfide intermediate is the Cys239. The interaction with tRNA stretch occupies residues 344–345; the sequence is RY.

It belongs to the MnmA/TRMU family.

The protein localises to the cytoplasm. The catalysed reaction is S-sulfanyl-L-cysteinyl-[protein] + uridine(34) in tRNA + AH2 + ATP = 2-thiouridine(34) in tRNA + L-cysteinyl-[protein] + A + AMP + diphosphate + H(+). Catalyzes the 2-thiolation of uridine at the wobble position (U34) of tRNA, leading to the formation of s(2)U34. The protein is tRNA-specific 2-thiouridylase MnmA of Prochlorococcus marinus (strain SARG / CCMP1375 / SS120).